Consider the following 309-residue polypeptide: Probable 5-dehydro-4-deoxyglucarate dehydratase (309 aa).

It belongs to the DapA family.

The enzyme catalyses 5-dehydro-4-deoxy-D-glucarate + H(+) = 2,5-dioxopentanoate + CO2 + H2O. Its pathway is carbohydrate acid metabolism; D-glucarate degradation; 2,5-dioxopentanoate from D-glucarate: step 2/2. This Saccharopolyspora erythraea (strain ATCC 11635 / DSM 40517 / JCM 4748 / NBRC 13426 / NCIMB 8594 / NRRL 2338) protein is Probable 5-dehydro-4-deoxyglucarate dehydratase.